We begin with the raw amino-acid sequence, 475 residues long: Ankyrin repeat, SAM and basic leucine zipper domain-containing protein 1 (475 aa).

Positions 1-25 (MAAGALRGLPVAGGGESSESEDDGW) are disordered. Phosphoserine is present on residues serine 17, serine 18, and serine 20. 6 ANK repeats span residues 45–74 (EKKE…SVDS), 78–107 (YGWT…NASF), 110–144 (DKQT…DPNV), 148–177 (RLMT…EVNT), 181–210 (NGYT…NKML), and 214–243 (DGKM…PLEG). The SAM domain maps to 272 to 334 (SYTAFGDLEV…KILAALKELQ (63 aa)).

As to quaternary structure, interacts with DDX4, PIWIL1, RANBP9 and TDRD1.

The protein resides in the cytoplasm. Plays a central role during spermatogenesis by repressing transposable elements and preventing their mobilization, which is essential for the germline integrity. Acts via the piRNA metabolic process, which mediates the repression of transposable elements during meiosis by forming complexes composed of piRNAs and Piwi proteins and governs the methylation and subsequent repression of transposons. Its association with pi-bodies suggests a participation in the primary piRNAs metabolic process. Required prior to the pachytene stage to facilitate the production of multiple types of piRNAs, including those associated with repeats involved in the regulation of retrotransposons. May act by mediating protein-protein interactions during germ cell maturation. The sequence is that of Ankyrin repeat, SAM and basic leucine zipper domain-containing protein 1 (ASZ1) from Papio anubis (Olive baboon).